Consider the following 807-residue polypeptide: Centrosomal protein of 97 kDa (807 aa).

LRR repeat units lie at residues 34-55 (DTQT…EKCR), 56-77 (NLVQ…AKLI), 78-99 (HLRV…KDLV), 100-121 (HLEW…NSST), 122-143 (SLQH…SKLK), 144-165 (SLKT…SACL), and 168-189 (SLTI…AFLA). Residues 208-246 (TPSIPGFDYRPFIVSWCLNLKVLDGYVVSQKESLKAEWL) form the LRRCT domain. Residues 306–330 (RSDGYLTSSTPNKRLPLSTEHHSPT) form a disordered region. One can recognise an IQ domain in the interval 519–548 (ISKAATKLQSCWRGFYARKYNPKVKDVCYE). The segment covering 607 to 623 (TANSSENDLPSASNSKH) has biased composition (polar residues). A disordered region spans residues 607–756 (TANSSENDLP…RPEITTCSDN (150 aa)). The span at 681–690 (TGRHYNDKVP) shows a compositional bias: basic and acidic residues. The span at 704–724 (SQSSKDSFTSEQDSSLLQQYL) shows a compositional bias: polar residues.

It localises to the cytoplasm. It is found in the cytoskeleton. The protein localises to the microtubule organizing center. Its subcellular location is the centrosome. Functionally, acts as a key negative regulator of ciliogenesis in collaboration with ccp110 by capping the mother centriole thereby preventing cilia formation. Required for recruitment of ccp110 to the centrosome. This chain is Centrosomal protein of 97 kDa (cep97), found in Xenopus laevis (African clawed frog).